A 499-amino-acid polypeptide reads, in one-letter code: Protein dml1 (499 aa).

This sequence belongs to the misato family.

The protein localises to the mitochondrion. Functionally, involved in the partitioning of the mitochondrial organelle and mitochondrial DNA (mtDNA) inheritance. The chain is Protein dml1 (dml1) from Aspergillus clavatus (strain ATCC 1007 / CBS 513.65 / DSM 816 / NCTC 3887 / NRRL 1 / QM 1276 / 107).